A 431-amino-acid polypeptide reads, in one-letter code: Phosphomethylpyrimidine synthase (431 aa).

Substrate-binding positions include asparagine 66, methionine 95, tyrosine 124, histidine 163, 185–187, 226–229, and glutamate 265; these read SRG and DGLR. A Zn(2+)-binding site is contributed by histidine 269. Tyrosine 292 lines the substrate pocket. Histidine 333 is a binding site for Zn(2+). [4Fe-4S] cluster-binding residues include cysteine 408, cysteine 411, and cysteine 415.

It belongs to the ThiC family. [4Fe-4S] cluster serves as cofactor.

It catalyses the reaction 5-amino-1-(5-phospho-beta-D-ribosyl)imidazole + S-adenosyl-L-methionine = 4-amino-2-methyl-5-(phosphooxymethyl)pyrimidine + CO + 5'-deoxyadenosine + formate + L-methionine + 3 H(+). Its pathway is cofactor biosynthesis; thiamine diphosphate biosynthesis. Its function is as follows. Catalyzes the synthesis of the hydroxymethylpyrimidine phosphate (HMP-P) moiety of thiamine from aminoimidazole ribotide (AIR) in a radical S-adenosyl-L-methionine (SAM)-dependent reaction. The chain is Phosphomethylpyrimidine synthase from Dehalococcoides mccartyi (strain CBDB1).